Consider the following 43-residue polypeptide: Mu-conotoxin-like Cal 12.2c (43 aa).

Arg1 is a propeptide. Cystine bridges form between Cys4-Cys16, Cys11-Cys24, Cys18-Cys29, and Cys23-Cys35. Trp31 bears the 6'-bromotryptophan mark. Pro36 is modified (4-hydroxyproline). Position 40 is a 6'-bromotryptophan (Trp40).

As to expression, expressed by the venom duct.

It is found in the secreted. Mu-conotoxins block voltage-gated sodium channels. This toxin reversibly blocks voltage-gated sodium channel in cephalopods, with no alteration in the voltage dependence of sodium conductance or on the kinetics of inactivation. This is Mu-conotoxin-like Cal 12.2c from Californiconus californicus (California cone).